A 284-amino-acid chain; its full sequence is 2-dehydro-3-deoxyphosphooctonate aldolase (284 aa).

The protein belongs to the KdsA family.

The protein localises to the cytoplasm. It carries out the reaction D-arabinose 5-phosphate + phosphoenolpyruvate + H2O = 3-deoxy-alpha-D-manno-2-octulosonate-8-phosphate + phosphate. It participates in carbohydrate biosynthesis; 3-deoxy-D-manno-octulosonate biosynthesis; 3-deoxy-D-manno-octulosonate from D-ribulose 5-phosphate: step 2/3. Its pathway is bacterial outer membrane biogenesis; lipopolysaccharide biosynthesis. This Burkholderia orbicola (strain MC0-3) protein is 2-dehydro-3-deoxyphosphooctonate aldolase.